Here is a 229-residue protein sequence, read N- to C-terminus: Type III pantothenate kinase (229 aa).

7–14 (DVGNSSVD) contacts ATP. Residues Tyr-78 and 85 to 88 (GTDR) each bind substrate. Asp-87 (proton acceptor) is an active-site residue. Thr-110 lines the ATP pocket. Substrate is bound at residue Thr-161.

The protein belongs to the type III pantothenate kinase family. Homodimer. Requires NH4(+) as cofactor. K(+) serves as cofactor.

It localises to the cytoplasm. It catalyses the reaction (R)-pantothenate + ATP = (R)-4'-phosphopantothenate + ADP + H(+). The protein operates within cofactor biosynthesis; coenzyme A biosynthesis; CoA from (R)-pantothenate: step 1/5. Its function is as follows. Catalyzes the phosphorylation of pantothenate (Pan), the first step in CoA biosynthesis. This chain is Type III pantothenate kinase, found in Aquifex aeolicus (strain VF5).